A 214-amino-acid chain; its full sequence is Ribonuclease HII (214 aa).

Residues Glu26–Arg214 form the RNase H type-2 domain. A divalent metal cation is bound by residues Asp32, Glu33, and Asp124.

This sequence belongs to the RNase HII family. It depends on Mn(2+) as a cofactor. The cofactor is Mg(2+).

The protein localises to the cytoplasm. It carries out the reaction Endonucleolytic cleavage to 5'-phosphomonoester.. Its function is as follows. Endonuclease that specifically degrades the RNA of RNA-DNA hybrids. This Burkholderia lata (strain ATCC 17760 / DSM 23089 / LMG 22485 / NCIMB 9086 / R18194 / 383) protein is Ribonuclease HII.